The following is a 472-amino-acid chain: Chromosomal replication initiator protein DnaA (472 aa).

Residues 1 to 73 are domain I, interacts with DnaA modulators; sequence MSNMEQDRWS…LSCWQAELPE (73 aa). A domain II region spans residues 73–128; the sequence is EVNRVDLTVRSPVRCATPAKEVPAPVESRRDEQRPSAERSNGATPVSANHDALGGS. A disordered region spans residues 90–124; sequence PAKEVPAPVESRRDEQRPSAERSNGATPVSANHDA. The segment covering 99-109 has biased composition (basic and acidic residues); that stretch reads ESRRDEQRPSA. Polar residues predominate over residues 110-119; that stretch reads ERSNGATPVS. The domain III, AAA+ region stretch occupies residues 129–351; it reads PLDPRLTFAS…GAINRLLAHS (223 aa). ATP-binding residues include Gly176, Gly178, Lys179, and Thr180. A domain IV, binds dsDNA region spans residues 352–472; sequence KLNNQPVTLE…VESLKRQLQE (121 aa).

The protein belongs to the DnaA family. In terms of assembly, oligomerizes as a right-handed, spiral filament on DNA at oriC.

The protein localises to the cytoplasm. Plays an essential role in the initiation and regulation of chromosomal replication. ATP-DnaA binds to the origin of replication (oriC) to initiate formation of the DNA replication initiation complex once per cell cycle. Binds the DnaA box (a 9 base pair repeat at the origin) and separates the double-stranded (ds)DNA. Forms a right-handed helical filament on oriC DNA; dsDNA binds to the exterior of the filament while single-stranded (ss)DNA is stabiized in the filament's interior. The ATP-DnaA-oriC complex binds and stabilizes one strand of the AT-rich DNA unwinding element (DUE), permitting loading of DNA polymerase. After initiation quickly degrades to an ADP-DnaA complex that is not apt for DNA replication. Binds acidic phospholipids. The sequence is that of Chromosomal replication initiator protein DnaA from Rhodopseudomonas palustris (strain ATCC BAA-98 / CGA009).